A 370-amino-acid polypeptide reads, in one-letter code: Maturase K (370 aa).

It belongs to the intron maturase 2 family. MatK subfamily.

It localises to the plastid. The protein localises to the chloroplast. In terms of biological role, usually encoded in the trnK tRNA gene intron. Probably assists in splicing its own and other chloroplast group II introns. This Marchantia polymorpha (Common liverwort) protein is Maturase K.